A 168-amino-acid chain; its full sequence is Cyclin-dependent kinase 4 inhibitor C (168 aa).

ANK repeat units lie at residues 4–33, 37–65, 69–98, and 102–132; these read PWGNELASAAARGDLEQLTSLLQNNVNVNA, FGRTALQVMKLGNPEIARRLLLRGANPDL, TGFAVIHDAARAGFLDTLQTLLEFQADVNI, and EGNLPLHLAAKEGHLRVVEFLVKHTASNVGH.

Belongs to the CDKN2 cyclin-dependent kinase inhibitor family. Heterodimer of p18 with CDK6. In terms of tissue distribution, highest levels found in skeletal muscle. Also found in pancreas and heart.

Its function is as follows. Interacts strongly with CDK6, weakly with CDK4. Inhibits cell growth and proliferation with a correlated dependence on endogenous retinoblastoma protein RB. The polypeptide is Cyclin-dependent kinase 4 inhibitor C (CDKN2C) (Homo sapiens (Human)).